A 118-amino-acid chain; its full sequence is Cytochrome b-c1 complex subunit 7 (118 aa).

Residues 1–32 form an igE-binding. Immunodominant epitope; induces specific IgE antibody production in mice. Causes degranulation of rat basophilic leukemia (RBL) cells and the release of beta-hexosaminidase from them region; the sequence is MVHLTKTLRFINNPGFRKFYYGLQGYNKYGLY.

It belongs to the UQCRB/QCR7 family. As to quaternary structure, component of the ubiquinol-cytochrome c oxidoreductase (cytochrome b-c1 complex, complex III, CIII), a multisubunit enzyme composed of 3 respiratory subunits cytochrome b, cytochrome c1 and Rieske protein, 2 core protein subunits, and additional low-molecular weight protein subunits. The complex exists as an obligatory dimer and forms supercomplexes (SCs) in the inner mitochondrial membrane with cytochrome c oxidase (complex IV, CIV).

Its subcellular location is the mitochondrion inner membrane. Component of the ubiquinol-cytochrome c oxidoreductase, a multisubunit transmembrane complex that is part of the mitochondrial electron transport chain which drives oxidative phosphorylation. The respiratory chain contains 3 multisubunit complexes succinate dehydrogenase (complex II, CII), ubiquinol-cytochrome c oxidoreductase (cytochrome b-c1 complex, complex III, CIII) and cytochrome c oxidase (complex IV, CIV), that cooperate to transfer electrons derived from NADH and succinate to molecular oxygen, creating an electrochemical gradient over the inner membrane that drives transmembrane transport and the ATP synthase. The cytochrome b-c1 complex catalyzes electron transfer from ubiquinol to cytochrome c, linking this redox reaction to translocation of protons across the mitochondrial inner membrane, with protons being carried across the membrane as hydrogens on the quinol. In the process called Q cycle, 2 protons are consumed from the matrix, 4 protons are released into the intermembrane space and 2 electrons are passed to cytochrome c. This is Cytochrome b-c1 complex subunit 7 from Dermatophagoides farinae (American house dust mite).